Consider the following 255-residue polypeptide: Putative glutamine amidotransferase YafJ (255 aa).

Residue C2 is the For GATase activity of the active site. The Glutamine amidotransferase type-2 domain occupies 2 to 251 (CELLGMSANV…PGEWRLFCLG (250 aa)).

The sequence is that of Putative glutamine amidotransferase YafJ (yafJ) from Escherichia coli (strain K12).